Reading from the N-terminus, the 256-residue chain is MVKSHIGSWILVLFVAMWSDVGLCKKRPKPGGGWNTGGSRYPGQGSPGGNRYPPQGGGGWGQPHGGGWGQPHGGGWGQPHGGGWGQPHGGGGWGQGGSHSQWNKPSKPKTNMKHVAGAAAAGAVVGGLGGYMLGSAMSRPLIHFGSDYEDRYYRENMYRYPNQVYYRPVDQYSNQNNFVHDCVNITVKQHTVTTTTKGENFTETDIKIMERVVEQMCITQYQRESQAYYQRGASVILFSSPPVILLISFLIFLIVG.

The signal sequence occupies residues 1–24 (MVKSHIGSWILVLFVAMWSDVGLC). Residues 25 to 233 (KKRPKPGGGW…ESQAYYQRGA (209 aa)) are interaction with GRB2, ERI3 and SYN1. Positions 28-110 (PKPGGGWNTG…QWNKPSKPKT (83 aa)) are disordered. Tandem repeats lie at residues 54–62 (PQGGGGWGQ), 63–70 (PHGGGWGQ), 71–78 (PHGGGWGQ), 79–86 (PHGGGWGQ), and 87–95 (PHGGGGWGQ). The segment at 54–95 (PQGGGGWGQPHGGGWGQPHGGGWGQPHGGGWGQPHGGGGWGQ) is 5 X 8 AA tandem repeats of P-H-G-G-G-W-G-Q. The segment covering 55 to 97 (QGGGGWGQPHGGGWGQPHGGGWGQPHGGGWGQPHGGGGWGQGG) has biased composition (gly residues). Residues histidine 64, glycine 65, glycine 66, histidine 72, glycine 73, glycine 74, histidine 80, glycine 81, glycine 82, histidine 88, glycine 90, and glycine 91 each contribute to the Cu(2+) site. A disulfide bond links cysteine 182 and cysteine 217. 2 N-linked (GlcNAc...) asparagine glycosylation sites follow: asparagine 184 and asparagine 200. Alanine 233 is lipidated: GPI-anchor amidated alanine. Positions 234 to 256 (SVILFSSPPVILLISFLIFLIVG) are cleaved as a propeptide — removed in mature form.

This sequence belongs to the prion family. As to quaternary structure, monomer and homodimer. Has a tendency to aggregate into amyloid fibrils containing a cross-beta spine, formed by a steric zipper of superposed beta-strands. Soluble oligomers may represent an intermediate stage on the path to fibril formation. Copper binding may promote oligomerization. Interacts with GRB2, APP, ERI3/PRNPIP and SYN1. Mislocalized cytosolically exposed PrP interacts with MGRN1; this interaction alters MGRN1 subcellular location and causes lysosomal enlargement. Interacts with KIAA1191.

The protein localises to the cell membrane. The protein resides in the golgi apparatus. Its function is as follows. Its primary physiological function is unclear. Has cytoprotective activity against internal or environmental stresses. May play a role in neuronal development and synaptic plasticity. May be required for neuronal myelin sheath maintenance. May play a role in iron uptake and iron homeostasis. Soluble oligomers are toxic to cultured neuroblastoma cells and induce apoptosis (in vitro). Association with GPC1 (via its heparan sulfate chains) targets PRNP to lipid rafts. Also provides Cu(2+) or Zn(2+) for the ascorbate-mediated GPC1 deaminase degradation of its heparan sulfate side chains. The sequence is that of Major prion protein (PRNP) from Budorcas taxicolor (Golden takin).